Here is a 276-residue protein sequence, read N- to C-terminus: Putative E3 ubiquitin-protein ligase SINA-like 9 (276 aa).

The RING-type zinc-finger motif lies at 38-74 (CPICCEALTSPIFQCDNGHLACGSCCPKLSNKCPACT). An SBD region spans residues 88–274 (VLESILIPCP…MQVFIIENVD (187 aa)). An SIAH-type zinc finger spans residues 91–149 (SILIPCPNVRFGCTKSFFYGKESAHEKECIFSQCSCPSSVCDYTGSYKDLYAHYKLTHS). Cys96, Cys103, His115, Cys119, Cys126, Cys131, His143, and His148 together coordinate Zn(2+).

Belongs to the SINA (Seven in absentia) family.

It carries out the reaction S-ubiquitinyl-[E2 ubiquitin-conjugating enzyme]-L-cysteine + [acceptor protein]-L-lysine = [E2 ubiquitin-conjugating enzyme]-L-cysteine + N(6)-ubiquitinyl-[acceptor protein]-L-lysine.. The protein operates within protein modification; protein ubiquitination. E3 ubiquitin-protein ligase that mediates ubiquitination and subsequent proteasomal degradation of target proteins. E3 ubiquitin ligases accept ubiquitin from an E2 ubiquitin-conjugating enzyme in the form of a thioester and then directly transfers the ubiquitin to targeted substrates. It probably triggers the ubiquitin-mediated degradation of different substrates. The polypeptide is Putative E3 ubiquitin-protein ligase SINA-like 9 (Arabidopsis thaliana (Mouse-ear cress)).